We begin with the raw amino-acid sequence, 407 residues long: Argininosuccinate synthase (407 aa).

ATP-binding positions include 13–21 (AYSGGLDTS) and alanine 40. Residues tyrosine 91 and serine 96 each contribute to the L-citrulline site. Glycine 121 contacts ATP. L-aspartate-binding residues include threonine 123, asparagine 127, and aspartate 128. Asparagine 127 is an L-citrulline binding site. Residues arginine 131, serine 182, serine 191, glutamate 267, and tyrosine 279 each contribute to the L-citrulline site.

The protein belongs to the argininosuccinate synthase family. Type 1 subfamily. As to quaternary structure, homotetramer.

The protein resides in the cytoplasm. The enzyme catalyses L-citrulline + L-aspartate + ATP = 2-(N(omega)-L-arginino)succinate + AMP + diphosphate + H(+). It functions in the pathway amino-acid biosynthesis; L-arginine biosynthesis; L-arginine from L-ornithine and carbamoyl phosphate: step 2/3. In Agrobacterium fabrum (strain C58 / ATCC 33970) (Agrobacterium tumefaciens (strain C58)), this protein is Argininosuccinate synthase.